An 867-amino-acid chain; its full sequence is GRB2-associated and regulator of MAPK protein 1 (867 aa).

Residues 12–322 (NNITWSTTTL…GLLQGESWFE (311 aa)) form a CABIT region. Residue tyrosine 464 is modified to Phosphotyrosine. 3 disordered regions span residues 511-530 (SADV…AVKE), 536-594 (DAPP…QIES), and 735-758 (PPRT…TADA). Polar residues-rich tracts occupy residues 544–554 (SSKQAGSSSAT) and 569–581 (SPSP…SSGL). Basic and acidic residues predominate over residues 740 to 749 (KCTDAKKDAE). Positions 802–867 (ISIEEISKSL…QFINGWRPKM (66 aa)) constitute an SAM domain.

It belongs to the GAREM family.

Its function is as follows. Adapter protein that may provide a link between cell surface epidermal growth factor receptor and the MAPK/ERK signaling pathway. May promote cell proliferation. The chain is GRB2-associated and regulator of MAPK protein 1 (garem1) from Danio rerio (Zebrafish).